Consider the following 344-residue polypeptide: Zinc metalloproteinase nas-6 (344 aa).

The N-terminal stretch at 1 to 19 is a signal peptide; it reads MLDHVLLLTYCLVSTVVRS. In terms of domain architecture, Peptidase M12A spans 72-266; the sequence is NALKNKQLTW…VKINKLYSCK (195 aa). Intrachain disulfides connect cysteine 114–cysteine 265, cysteine 135–cysteine 154, cysteine 300–cysteine 334, cysteine 307–cysteine 327, and cysteine 314–cysteine 331. Histidine 162 provides a ligand contact to Zn(2+). Residue glutamate 163 is part of the active site. Zn(2+)-binding residues include histidine 166 and histidine 172. The ShKT domain occupies 300-334; the sequence is CVDHFADCPHFAQYCTRASFFFVMKSYCPFTCKHC.

Zn(2+) is required as a cofactor. As to expression, expressed in pharyngeal and body wall muscles, intestine, hypodermis and pharyngeal mc2 cells.

It localises to the secreted. In terms of biological role, metalloprotease. This is Zinc metalloproteinase nas-6 (nas-6) from Caenorhabditis elegans.